The primary structure comprises 268 residues: Tryptophan synthase alpha chain (268 aa).

Residues glutamate 49 and aspartate 60 each act as proton acceptor in the active site.

This sequence belongs to the TrpA family. Tetramer of two alpha and two beta chains.

The catalysed reaction is (1S,2R)-1-C-(indol-3-yl)glycerol 3-phosphate + L-serine = D-glyceraldehyde 3-phosphate + L-tryptophan + H2O. Its pathway is amino-acid biosynthesis; L-tryptophan biosynthesis; L-tryptophan from chorismate: step 5/5. The alpha subunit is responsible for the aldol cleavage of indoleglycerol phosphate to indole and glyceraldehyde 3-phosphate. The protein is Tryptophan synthase alpha chain of Pectobacterium atrosepticum (strain SCRI 1043 / ATCC BAA-672) (Erwinia carotovora subsp. atroseptica).